We begin with the raw amino-acid sequence, 191 residues long: Fe/S biogenesis protein NfuA (191 aa).

[4Fe-4S] cluster is bound by residues Cys149 and Cys152.

The protein belongs to the NfuA family. In terms of assembly, homodimer. The cofactor is [4Fe-4S] cluster.

Functionally, involved in iron-sulfur cluster biogenesis. Binds a 4Fe-4S cluster, can transfer this cluster to apoproteins, and thereby intervenes in the maturation of Fe/S proteins. Could also act as a scaffold/chaperone for damaged Fe/S proteins. This is Fe/S biogenesis protein NfuA from Citrobacter koseri (strain ATCC BAA-895 / CDC 4225-83 / SGSC4696).